Reading from the N-terminus, the 92-residue chain is Putative septation protein SpoVG (92 aa).

This sequence belongs to the SpoVG family.

In terms of biological role, could be involved in septation. The protein is Putative septation protein SpoVG of Thermoanaerobacter sp. (strain X514).